Here is a 165-residue protein sequence, read N- to C-terminus: Cytochrome c-type biogenesis protein CcmE (165 aa).

The Cytoplasmic segment spans residues 1 to 7 (MTRKQRR). Residues 8–28 (LMMIGGAGVVLVVAVGLVLNA) form a helical; Signal-anchor for type II membrane protein membrane-spanning segment. Topologically, residues 29 to 165 (MRGSIVFFST…ASADAMRPAR (137 aa)) are periplasmic. Histidine 122 and tyrosine 126 together coordinate heme. Over residues 138–149 (QGHWKDDYEKKP) the composition is skewed to basic and acidic residues. The disordered stretch occupies residues 138–165 (QGHWKDDYEKKPPGPGAAASADAMRPAR). The segment covering 153 to 165 (GAAASADAMRPAR) has biased composition (low complexity).

This sequence belongs to the CcmE/CycJ family.

It localises to the cell inner membrane. Its function is as follows. Heme chaperone required for the biogenesis of c-type cytochromes. Transiently binds heme delivered by CcmC and transfers the heme to apo-cytochromes in a process facilitated by CcmF and CcmH. This chain is Cytochrome c-type biogenesis protein CcmE, found in Rhodopseudomonas palustris (strain HaA2).